Consider the following 657-residue polypeptide: L-type lectin-domain containing receptor kinase I.8 (657 aa).

The first 23 residues, 1-23 (MAPGLDLIWMVISFLLLIHLSSQ), serve as a signal peptide directing secretion. Residues 24 to 282 (QETGFSFNGF…QVPHPKMKTS (259 aa)) are Extracellular-facing. Residues 25–257 (ETGFSFNGFR…NHYILGWSFS (233 aa)) are legume-lectin like. Asn74, Asn124, Asn181, Asn204, and Asn225 each carry an N-linked (GlcNAc...) asparagine glycan. Residues 283–303 (LLLILLLIVLGIILLVLLVGA) traverse the membrane as a helical segment. Residues 304–657 (YLYRRNKYAE…THSIQYGIGR (354 aa)) lie on the Cytoplasmic side of the membrane. In terms of domain architecture, Protein kinase spans 339–611 (FHKDGFLGKG…VQYLDRQVSL (273 aa)). ATP contacts are provided by residues 345 to 353 (LGKGGFGEV) and Lys366. The active-site Proton acceptor is Asp462.

In the C-terminal section; belongs to the protein kinase superfamily. Ser/Thr protein kinase family. This sequence in the N-terminal section; belongs to the leguminous lectin family.

The protein localises to the cell membrane. It carries out the reaction L-seryl-[protein] + ATP = O-phospho-L-seryl-[protein] + ADP + H(+). The catalysed reaction is L-threonyl-[protein] + ATP = O-phospho-L-threonyl-[protein] + ADP + H(+). Functionally, involved in resistance response to the pathogenic fungus Alternaria brassicicola. This chain is L-type lectin-domain containing receptor kinase I.8, found in Arabidopsis thaliana (Mouse-ear cress).